The following is a 172-amino-acid chain: Small ribosomal subunit protein uS5 (172 aa).

One can recognise an S5 DRBM domain in the interval 15 to 78 (LNDKLIFINR…ANAKRNLSRI (64 aa)).

This sequence belongs to the universal ribosomal protein uS5 family. In terms of assembly, part of the 30S ribosomal subunit. Contacts proteins S4 and S8.

In terms of biological role, with S4 and S12 plays an important role in translational accuracy. Its function is as follows. Located at the back of the 30S subunit body where it stabilizes the conformation of the head with respect to the body. The protein is Small ribosomal subunit protein uS5 of Dehalococcoides mccartyi (strain ATCC BAA-2266 / KCTC 15142 / 195) (Dehalococcoides ethenogenes (strain 195)).